Reading from the N-terminus, the 219-residue chain is Ribose-5-phosphate isomerase A (219 aa).

Substrate contacts are provided by residues 28–31 (TGST), 81–84 (DGAD), and 94–97 (KGGG). Glutamate 103 acts as the Proton acceptor in catalysis. Lysine 121 lines the substrate pocket.

Belongs to the ribose 5-phosphate isomerase family. In terms of assembly, homodimer.

The catalysed reaction is aldehydo-D-ribose 5-phosphate = D-ribulose 5-phosphate. Its pathway is carbohydrate degradation; pentose phosphate pathway; D-ribose 5-phosphate from D-ribulose 5-phosphate (non-oxidative stage): step 1/1. Catalyzes the reversible conversion of ribose-5-phosphate to ribulose 5-phosphate. The polypeptide is Ribose-5-phosphate isomerase A (Pectobacterium carotovorum subsp. carotovorum (strain PC1)).